Reading from the N-terminus, the 190-residue chain is Large ribosomal subunit protein bL25 (190 aa).

The protein belongs to the bacterial ribosomal protein bL25 family. CTC subfamily. As to quaternary structure, part of the 50S ribosomal subunit; part of the 5S rRNA/L5/L18/L25 subcomplex. Contacts the 5S rRNA. Binds to the 5S rRNA independently of L5 and L18.

In terms of biological role, this is one of the proteins that binds to the 5S RNA in the ribosome where it forms part of the central protuberance. The chain is Large ribosomal subunit protein bL25 from Neisseria meningitidis serogroup A / serotype 4A (strain DSM 15465 / Z2491).